An 860-amino-acid polypeptide reads, in one-letter code: Paladin (860 aa).

The disordered stretch occupies residues 1-24 (MGTTASAAPQATLHERLHSDSMTD). G2 is lipidated: N-myristoyl glycine. The span at 13 to 24 (LHERLHSDSMTD) shows a compositional bias: basic and acidic residues.

The protein belongs to the paladin family.

It is found in the cytoplasm. It localises to the cytosol. This chain is Paladin (pald1), found in Danio rerio (Zebrafish).